The following is a 225-amino-acid chain: uncharacterized protein (225 aa).

Residues 181–203 (INIFVVFMFIIYLLFYIISSTVF) traverse the membrane as a helical segment.

Its subcellular location is the cell membrane. This is an uncharacterized protein from Bacillus anthracis.